The primary structure comprises 176 residues: ATP-dependent protease subunit HslV (176 aa).

Thr6 is an active-site residue. Positions 161, 164, and 167 each coordinate Na(+).

This sequence belongs to the peptidase T1B family. HslV subfamily. In terms of assembly, a double ring-shaped homohexamer of HslV is capped on each side by a ring-shaped HslU homohexamer. The assembly of the HslU/HslV complex is dependent on binding of ATP.

The protein localises to the cytoplasm. It catalyses the reaction ATP-dependent cleavage of peptide bonds with broad specificity.. Its activity is regulated as follows. Allosterically activated by HslU binding. In terms of biological role, protease subunit of a proteasome-like degradation complex believed to be a general protein degrading machinery. In Aquifex aeolicus (strain VF5), this protein is ATP-dependent protease subunit HslV.